The following is a 227-amino-acid chain: uncharacterized protein (227 aa).

A signal peptide spans 1 to 22; the sequence is MDSVMRKSLFLLLPLVVTNAHA.

This is an uncharacterized protein from Salmonella typhi.